The primary structure comprises 968 residues: RNA polymerase-associated protein RapA (968 aa).

Positions 164-334 (DVGRRHAPRV…FARLRLLDPN (171 aa)) constitute a Helicase ATP-binding domain. 177-184 (DEVGLGKT) is a binding site for ATP. A DEAH box motif is present at residues 280–283 (DEAH). Residues 490-662 (RVEWLMGYLT…YLASPDETEG (173 aa)) enclose the Helicase C-terminal domain.

It belongs to the SNF2/RAD54 helicase family. RapA subfamily. Interacts with the RNAP. Has a higher affinity for the core RNAP than for the holoenzyme. Its ATPase activity is stimulated by binding to RNAP.

In terms of biological role, transcription regulator that activates transcription by stimulating RNA polymerase (RNAP) recycling in case of stress conditions such as supercoiled DNA or high salt concentrations. Probably acts by releasing the RNAP, when it is trapped or immobilized on tightly supercoiled DNA. Does not activate transcription on linear DNA. Probably not involved in DNA repair. The chain is RNA polymerase-associated protein RapA from Escherichia coli O81 (strain ED1a).